Consider the following 591-residue polypeptide: Proteasome-associated ATPase (591 aa).

Positions 10–77 (VAAAEELHAL…LREEVDRLGQ (68 aa)) form a coiled coil. 278 to 283 (GCGKTL) lines the ATP pocket. The tract at residues 590-591 (YL) is docks into pockets in the proteasome alpha-ring.

Belongs to the AAA ATPase family. Homohexamer. Assembles into a hexameric ring structure that likely caps the 20S proteasome core. Can form a complex composed of two stacked hexameric rings in vitro. Probably interacts with the prokaryotic ubiquitin-like protein Pup through a hydrophobic interface; the expected interacting region of ARC lies in its N-terminal coiled-coil domain. There is likely one Pup binding site per ARC hexamer ring. Upon ATP-binding, the C-terminus of ARC probably interacts with the alpha-rings of the proteasome core, possibly by binding to the intersubunit pockets.

It functions in the pathway protein degradation; proteasomal Pup-dependent pathway. With respect to regulation, ATPase activity is inhibited by N-ethylmaleimide (NEM) but not by sodium azide. In terms of biological role, ATPase which is responsible for recognizing, binding, unfolding and translocation of pupylated proteins into the bacterial 20S proteasome core particle. May be essential for opening the gate of the 20S proteasome via an interaction with its C-terminus, thereby allowing substrate entry and access to the site of proteolysis. Thus, the C-termini of the proteasomal ATPase may function like a 'key in a lock' to induce gate opening and therefore regulate proteolysis. The chain is Proteasome-associated ATPase from Rhodococcus erythropolis (Arthrobacter picolinophilus).